The sequence spans 638 residues: Threonine--tRNA ligase (638 aa).

The TGS domain occupies 1–59 (MEKIKVKIKGKEYEVEKGTPLGKIFELAGIKDALGGVINGKIIDLQTPVRESGEIKPVY). The segment at 243 to 536 (DHRRLGKELE…LLEHYAGLLP (294 aa)) is catalytic. Zn(2+)-binding residues include C336, H387, and H513.

Belongs to the class-II aminoacyl-tRNA synthetase family. Homodimer. Zn(2+) serves as cofactor.

The protein localises to the cytoplasm. The enzyme catalyses tRNA(Thr) + L-threonine + ATP = L-threonyl-tRNA(Thr) + AMP + diphosphate + H(+). Catalyzes the attachment of threonine to tRNA(Thr) in a two-step reaction: L-threonine is first activated by ATP to form Thr-AMP and then transferred to the acceptor end of tRNA(Thr). Also edits incorrectly charged L-seryl-tRNA(Thr). The polypeptide is Threonine--tRNA ligase (Aquifex aeolicus (strain VF5)).